The following is a 3159-amino-acid chain: E1A-binding protein p400 (3159 aa).

Positions 1–16 are enriched in polar residues; the sequence is MHHGTGPQNVQHQLQR. 7 disordered regions span residues 1 to 65, 125 to 154, 212 to 261, 282 to 359, 545 to 594, 633 to 658, and 684 to 770; these read MHHG…MNRS, SPLSQQVQTQSPTQPSPGPGQALQNVRAGA, PGTP…HITT, VLQG…PASP, LMPT…PQLP, QQPNVPIPAPPSSQLPIPPSQPAQLA, and TRLP…SQDT. Positions 31-41 are enriched in pro residues; sequence HPNPPPSPAAP. Low complexity predominate over residues 42–55; sequence FAPSASPSAPQSPS. Ser53 carries the phosphoserine modification. Residues 56–65 are compositionally biased toward polar residues; sequence YQIQQLMNRS. Composition is skewed to low complexity over residues 125–137 and 237–256; these read SPLSQQVQTQSPT and LGPQSPAAAGGAGLQPLASP. At Ser135 the chain carries Phosphoserine. 2 positions are modified to phosphoserine: Ser315 and Ser321. Positions 558 to 571 are enriched in low complexity; sequence QAAQLAGQRQSQQQ. Over residues 572-585 the composition is skewed to polar residues; that stretch reads YDPSTGPPVQNAAS. 2 stretches are compositionally biased toward pro residues: residues 637 to 653 and 689 to 698; these read VPIPAPPSSQLPIPPSQ and DPAPPCPRPL. Over residues 699–711 the composition is skewed to low complexity; the sequence is PTSSTSSLAPVSG. Polar residues-rich tracts occupy residues 725–742 and 751–760; these read NRPSSATNKALSPVTSRT and TKPQSPAQNA. Phosphoserine occurs at positions 736 and 755. The span at 761-770 shows a compositional bias: low complexity; that stretch reads TSSQDSSQDT. Positions 799-871 constitute an HSA domain; sequence LPKLQEAPRP…EQSRLRRIAA (73 aa). Disordered regions lie at residues 915–967 and 997–1024; these read ELRP…GVVD and SSQWPRPKPDGEDTSGEEDADDCPGDRE. Phosphoserine occurs at positions 928 and 941. Thr945 carries the post-translational modification Phosphothreonine. Composition is skewed to acidic residues over residues 945–962 and 1008–1019; these read TDDEVDDEEETIEEEEAN and EDTSGEEDADDC. The tract at residues 951–1365 is interactions with RUVBL1 and RUVBL2; the sequence is DEEETIEEEE…NVLSILVRLQ (415 aa). At Ser1011 the chain carries Phosphoserine. The Helicase ATP-binding domain maps to 1103-1268; that stretch reads AKLYRKNLNG…WTMVHFLVPG (166 aa). An ATP-binding site is contributed by 1116 to 1123; the sequence is DEAGLGKT. A DEAH box-like motif is present at residues 1219-1222; that stretch reads DEMQ. The interval 1467–1582 is disordered; sequence VQYGQKPEGR…QAPSHAAGQS (116 aa). At Lys1472 the chain carries N6-acetyllysine. Composition is skewed to low complexity over residues 1481 to 1498 and 1538 to 1565; these read PSTHPPRTAAPTTASAAP and PASASSTAASPAHPAKLRAQTTAQASTP. Phosphoserine is present on residues Ser1547, Ser1728, and Ser1732. The segment at 1787–1807 is disordered; it reads GSLDGRRGKEAGPAHSYTSSS. Over residues 1789-1798 the composition is skewed to basic and acidic residues; it reads LDGRRGKEAG. The 158-residue stretch at 1899–2056 folds into the Helicase C-terminal domain; it reads KLEALAILLQ…GNDYSMAFLT (158 aa). Disordered stretches follow at residues 2119-2144 and 2287-2311; these read KSAQEGVLGPHTDALSSDSENMPCDE and KERKRHKTDPSAAGRKKKQRHGEAV. 2 positions are modified to N6-acetyllysine: Lys2349 and Lys2356. Positions 2360 to 2429 constitute a Myb-like domain; sequence EPGQDNPEWL…QCRNRYENVI (70 aa). Disordered stretches follow at residues 2524–2602 and 2665–2688; these read KEKK…AQPA and TPGGSAPAQVVHTQPPPRAVGSPA. Positions 2524–2789 are interaction with ZNF42; the sequence is KEKKALADQQ…QQQQQTTTTS (266 aa). The span at 2530-2540 shows a compositional bias: low complexity; sequence ADQQKAQQPAV. Pro residues-rich tracts occupy residues 2541–2563 and 2572–2589; these read AQPPPPQPQPPPPPQQPPPPLPQ and PAGPPAVQPQPQPQPQTQ. Low complexity predominate over residues 2590–2602; that stretch reads PQPVQAPAKAQPA. A Phosphoserine modification is found at Ser2686. Phosphothreonine is present on Thr2813. 2 disordered regions span residues 2821 to 2869 and 3115 to 3159; these read QKQK…TAPR and APLQ…PPCQ. Pro residues predominate over residues 2828–2843; the sequence is PPQPPPPQAQSAPPQP. Low complexity predominate over residues 2844–2866; it reads TAQVQVQTSQPPQQQSPQLTTVT. Residues 3129 to 3140 show a composition bias toward polar residues; that stretch reads PASSDSPSQQPK.

It belongs to the SNF2/RAD54 helicase family. SWR1 subfamily. Component of the NuA4 histone acetyltransferase complex which contains the catalytic subunit KAT5/TIP60 and the subunits EP400, TRRAP/PAF400, BRD8/SMAP, EPC1, DMAP1/DNMAP1, RUVBL1/TIP49, RUVBL2, ING3, actin, ACTL6A/BAF53A, MORF4L1/MRG15, MORF4L2/MRGX, MRGBP, YEATS4/GAS41, VPS72/YL1 and MEAF6. May also participate in the formation of NuA4 related complexes which lack the KAT5/TIP60 catalytic subunit, but which include the SWI/SNF related protein SRCAP. The NuA4 complex interacts with MYC and the adenovirus E1A protein. EP400 interacts with TRRAP, RUVBL1 and RUVBL2. Component of a SWR1-like complex. Interacts with ZNF42. Interacts with PHF5A. Interacts with human cytomegalovirus UL27. Interacts with human adenovirus 5 E1A protein; this interaction stabilizes MYC. In terms of tissue distribution, ubiquitously expressed.

The protein localises to the nucleus. Its function is as follows. Component of the NuA4 histone acetyltransferase complex which is involved in transcriptional activation of select genes principally by acetylation of nucleosomal histones H4 and H2A. This modification may both alter nucleosome - DNA interactions and promote interaction of the modified histones with other proteins which positively regulate transcription. May be required for transcriptional activation of E2F1 and MYC target genes during cellular proliferation. The NuA4 complex ATPase and helicase activities seem to be, at least in part, contributed by the association of RUVBL1 and RUVBL2 with EP400. May regulate ZNF42 transcription activity. Component of a SWR1-like complex that specifically mediates the removal of histone H2A.Z/H2AZ1 from the nucleosome. In Homo sapiens (Human), this protein is E1A-binding protein p400 (EP400).